Here is a 197-residue protein sequence, read N- to C-terminus: Phosphoheptose isomerase (197 aa).

An SIS domain is found at 36–197 (MVQCLVSEGK…IDQQLFGSTE (162 aa)). Residue 51 to 53 (NGG) participates in substrate binding. 2 residues coordinate Zn(2+): His-60 and Glu-64. Residues Glu-64, 93 to 94 (ND), 119 to 121 (STS), Ser-124, and Gln-174 each bind substrate. Zn(2+)-binding residues include Gln-174 and His-182.

This sequence belongs to the SIS family. GmhA subfamily. In terms of assembly, homotetramer. It depends on Zn(2+) as a cofactor.

It localises to the cytoplasm. The catalysed reaction is 2 D-sedoheptulose 7-phosphate = D-glycero-alpha-D-manno-heptose 7-phosphate + D-glycero-beta-D-manno-heptose 7-phosphate. It functions in the pathway carbohydrate biosynthesis; D-glycero-D-manno-heptose 7-phosphate biosynthesis; D-glycero-alpha-D-manno-heptose 7-phosphate and D-glycero-beta-D-manno-heptose 7-phosphate from sedoheptulose 7-phosphate: step 1/1. In terms of biological role, catalyzes the isomerization of sedoheptulose 7-phosphate in D-glycero-D-manno-heptose 7-phosphate. This Chromohalobacter salexigens (strain ATCC BAA-138 / DSM 3043 / CIP 106854 / NCIMB 13768 / 1H11) protein is Phosphoheptose isomerase.